The following is a 406-amino-acid chain: MIEYQIPVSFKDVVVGFTQEEWHRLSPAQRALYRDVMLETYSNLVSVGYEGTKPDVILRLEQEEAPWIGEAACPGCHCWEDIWRVNIQRKRRQDMLLRPGAAISKKTLPKEKSCEYNKFGKISLLSTDLFSSIQSPSNWNPCGKNLNHNLDLIGFKRNCAKKQDECYAYGKLLQRINHGRRPNGEKPRGCSHCEKAFTQNPALMYKPAVSDSLLYKRKRVPPTEKPHVCSECGKAFCYKSEFIRHQRSHTGEKPYGCTDCGKAFSHKSTLIKHQRIHTGVRPFECFFCGKAFTQKSHRTEHQRTHTGERPFVCSECGKSFGEKSYLNVHRKMHTGERPYRCRECGKSFSQKSCLNKHWRTHTGEKPYGCNECGKAFYQKPNLSRHQKIHARKNAYRNENLIIVGNT.

The 72-residue stretch at 8-79 (VSFKDVVVGF…EAACPGCHCW (72 aa)) folds into the KRAB domain. 6 C2H2-type zinc fingers span residues 227–249 (HVCS…QRSH), 255–277 (YGCT…QRIH), 283–305 (FECF…QRTH), 311–333 (FVCS…RKMH), 339–361 (YRCR…WRTH), and 367–389 (YGCN…QKIH).

The protein belongs to the krueppel C2H2-type zinc-finger protein family.

The protein localises to the nucleus. Its function is as follows. May be involved in transcriptional regulation. In Homo sapiens (Human), this protein is Zinc finger protein 793 (ZNF793).